Here is a 174-residue protein sequence, read N- to C-terminus: Disulfide bond formation protein B (174 aa).

Over Met-1 to Ser-14 the chain is Cytoplasmic. A helical membrane pass occupies residues Trp-15–Tyr-31. The Periplasmic portion of the chain corresponds to Leu-32 to Cys-49. Cys-41 and Cys-44 form a disulfide bridge. The helical transmembrane segment at Ala-50–Pro-65 threads the bilayer. At Phe-66 to Phe-71 the chain is on the cytoplasmic side. The helical transmembrane segment at Phe-72 to Lys-89 threads the bilayer. Over Glu-90–Gln-144 the chain is Periplasmic. An intrachain disulfide couples Cys-104 to Cys-130. A helical transmembrane segment spans residues Trp-145–Ser-163. Residues Gln-164 to Lys-174 lie on the Cytoplasmic side of the membrane.

Belongs to the DsbB family.

It localises to the cell inner membrane. Functionally, required for disulfide bond formation in some periplasmic proteins. Acts by oxidizing the DsbA protein. In Blochmanniella pennsylvanica (strain BPEN), this protein is Disulfide bond formation protein B.